The chain runs to 101 residues: Small ribosomal subunit protein uS14 (101 aa).

This sequence belongs to the universal ribosomal protein uS14 family. In terms of assembly, part of the 30S ribosomal subunit. Contacts proteins S3 and S10.

In terms of biological role, binds 16S rRNA, required for the assembly of 30S particles and may also be responsible for determining the conformation of the 16S rRNA at the A site. This is Small ribosomal subunit protein uS14 from Hydrogenovibrio crunogenus (strain DSM 25203 / XCL-2) (Thiomicrospira crunogena).